Reading from the N-terminus, the 386-residue chain is Succinyl-diaminopimelate desuccinylase (386 aa).

Histidine 77 is a Zn(2+) binding site. The active site involves aspartate 79. Aspartate 110 lines the Zn(2+) pocket. Glutamate 144 functions as the Proton acceptor in the catalytic mechanism. Positions 145, 173, and 359 each coordinate Zn(2+).

Belongs to the peptidase M20A family. DapE subfamily. As to quaternary structure, homodimer. The cofactor is Zn(2+). Co(2+) serves as cofactor.

It carries out the reaction N-succinyl-(2S,6S)-2,6-diaminopimelate + H2O = (2S,6S)-2,6-diaminopimelate + succinate. It participates in amino-acid biosynthesis; L-lysine biosynthesis via DAP pathway; LL-2,6-diaminopimelate from (S)-tetrahydrodipicolinate (succinylase route): step 3/3. Catalyzes the hydrolysis of N-succinyl-L,L-diaminopimelic acid (SDAP), forming succinate and LL-2,6-diaminopimelate (DAP), an intermediate involved in the bacterial biosynthesis of lysine and meso-diaminopimelic acid, an essential component of bacterial cell walls. The chain is Succinyl-diaminopimelate desuccinylase from Methylibium petroleiphilum (strain ATCC BAA-1232 / LMG 22953 / PM1).